Reading from the N-terminus, the 409-residue chain is Serine/threonine transporter SstT (409 aa).

9 helical membrane passes run L24 to F44, F48 to I68, I82 to M102, A142 to L162, L194 to G214, L218 to V238, I292 to M312, G319 to C339, and V365 to T385.

Belongs to the dicarboxylate/amino acid:cation symporter (DAACS) (TC 2.A.23) family.

It localises to the cell inner membrane. It catalyses the reaction L-serine(in) + Na(+)(in) = L-serine(out) + Na(+)(out). It carries out the reaction L-threonine(in) + Na(+)(in) = L-threonine(out) + Na(+)(out). Its function is as follows. Involved in the import of serine and threonine into the cell, with the concomitant import of sodium (symport system). In Neisseria meningitidis serogroup C / serotype 2a (strain ATCC 700532 / DSM 15464 / FAM18), this protein is Serine/threonine transporter SstT.